The primary structure comprises 486 residues: Serine/threonine-protein phosphatase 2A 56 kDa regulatory subunit alpha isoform (486 aa).

Residues 1–18 are compositionally biased toward low complexity; the sequence is MSSSSPPAGAASAAISAS. The disordered stretch occupies residues 1 to 52; sequence MSSSSPPAGAASAAISASEKVDGFTRKSVRKAQRQKRSQGSSQFRSQGSQAE. S2 carries the N-acetylserine modification. Positions 27–37 are enriched in basic residues; that stretch reads KSVRKAQRQKR. Residues 38 to 51 are compositionally biased toward low complexity; sequence SQGSSQFRSQGSQA. S41, S42, and S49 each carry phosphoserine.

It belongs to the phosphatase 2A regulatory subunit B56 family. As to quaternary structure, PP2A consists of a common heterodimeric core enzyme, composed of a 36 kDa catalytic subunit (subunit C) and a 65 kDa constant regulatory subunit (PR65 or subunit A), that associates with a variety of regulatory subunits. Proteins that associate with the core dimer include three families of regulatory subunits B (the R2/B/PR55/B55, R3/B''/PR72/PR130/PR59 and R5/B'/B56 families), the 48 kDa variable regulatory subunit, viral proteins, and cell signaling molecules. Interacts with SGO1. Post-translationally, phosphorylated on serine residues. In terms of tissue distribution, widely expressed with the highest expression in heart and skeletal muscle.

It is found in the cytoplasm. It localises to the nucleus. The protein resides in the chromosome. Its subcellular location is the centromere. In terms of biological role, the B regulatory subunit might modulate substrate selectivity and catalytic activity, and might also direct the localization of the catalytic enzyme to a particular subcellular compartment. The chain is Serine/threonine-protein phosphatase 2A 56 kDa regulatory subunit alpha isoform (PPP2R5A) from Homo sapiens (Human).